Reading from the N-terminus, the 263-residue chain is Acetylglutamate kinase (263 aa).

Residues 48-49 (GG), Arg-70, and Asn-162 contribute to the substrate site.

It belongs to the acetylglutamate kinase family. ArgB subfamily.

It is found in the cytoplasm. It catalyses the reaction N-acetyl-L-glutamate + ATP = N-acetyl-L-glutamyl 5-phosphate + ADP. Its pathway is amino-acid biosynthesis; L-arginine biosynthesis; N(2)-acetyl-L-ornithine from L-glutamate: step 2/4. In terms of biological role, catalyzes the ATP-dependent phosphorylation of N-acetyl-L-glutamate. The chain is Acetylglutamate kinase from Vibrio vulnificus (strain YJ016).